The chain runs to 175 residues: MKPDPRSTHFNAAGEVHMVDVTGKDITVREAVASARIHMSADAAEAIRRGDTKKGDVLAVARLAGIAGAKWTSHLIPLCHAIPIEAVSIDFDWVDESDSDDDAVANQTLRCTATARTTAKTGIEMESLTAASTAALTVYDMLKSVDRAMVIDQVRLESKSGGKSGDFRRDTGDKA.

Residues 78–80 (LCH) and 125–126 (ME) each bind substrate. Aspartate 140 is a catalytic residue.

This sequence belongs to the MoaC family. As to quaternary structure, homohexamer; trimer of dimers.

The catalysed reaction is (8S)-3',8-cyclo-7,8-dihydroguanosine 5'-triphosphate = cyclic pyranopterin phosphate + diphosphate. The protein operates within cofactor biosynthesis; molybdopterin biosynthesis. In terms of biological role, catalyzes the conversion of (8S)-3',8-cyclo-7,8-dihydroguanosine 5'-triphosphate to cyclic pyranopterin monophosphate (cPMP). The sequence is that of Cyclic pyranopterin monophosphate synthase from Rhodopirellula baltica (strain DSM 10527 / NCIMB 13988 / SH1).